Reading from the N-terminus, the 173-residue chain is Co-chaperone protein HscB homolog (173 aa).

In terms of domain architecture, J spans 5–77; that stretch reads CHFAQFDLQP…PRRALYLLTL (73 aa).

Belongs to the HscB family. As to quaternary structure, interacts with HscA and stimulates its ATPase activity.

Its function is as follows. Co-chaperone involved in the maturation of iron-sulfur cluster-containing proteins. Seems to help targeting proteins to be folded toward HscA. This Pseudomonas aeruginosa (strain UCBPP-PA14) protein is Co-chaperone protein HscB homolog.